Here is a 505-residue protein sequence, read N- to C-terminus: Putative thymidine phosphorylase (505 aa).

Belongs to the thymidine/pyrimidine-nucleoside phosphorylase family. Type 2 subfamily.

The catalysed reaction is thymidine + phosphate = 2-deoxy-alpha-D-ribose 1-phosphate + thymine. The protein is Putative thymidine phosphorylase of Tolumonas auensis (strain DSM 9187 / NBRC 110442 / TA 4).